The primary structure comprises 142 residues: Hemoglobin subunit alpha-A (142 aa).

Residues 2–142 enclose the Globin domain; the sequence is VLSAADKTNV…VGAVLTAKYR (141 aa). Histidine 59 is an O2 binding site. Histidine 88 contributes to the heme b binding site.

It belongs to the globin family. As to quaternary structure, heterotetramer of two alpha chains and two beta chains. Red blood cells.

Involved in oxygen transport from the lung to the various peripheral tissues. The protein is Hemoglobin subunit alpha-A (HBAA) of Anas platyrhynchos platyrhynchos (Northern mallard).